A 217-amino-acid polypeptide reads, in one-letter code: MIPQVVTNETITTISPNGINFPQKDESQPTQQRQDSLKKHLKAEIKVIVAIQIMCAVTVLALGIILASVPPVPYFNSVFSVLLKSGYPFIGALFFIASGILSIITERKSTKPLVDASLTLNILSVSFAFVGIIIISVSLAGLHPASEQCKQSKELSLIEHDYYQPFYNSDRSECAVTKSILTGALSVMLIISVLELGLALLSAMLWLREGVLTSLRM.

Over residues 1 to 20 (MIPQVVTNETITTISPNGIN) the composition is skewed to polar residues. The interval 1–33 (MIPQVVTNETITTISPNGINFPQKDESQPTQQR) is disordered. Topologically, residues 1-46 (MIPQVVTNETITTISPNGINFPQKDESQPTQQRQDSLKKHLKAEIK) are cytoplasmic. Residues 47 to 67 (VIVAIQIMCAVTVLALGIILA) traverse the membrane as a helical segment. Residues 68–84 (SVPPVPYFNSVFSVLLK) are Extracellular-facing. The chain crosses the membrane as a helical span at residues 85 to 105 (SGYPFIGALFFIASGILSIIT). At 106–121 (ERKSTKPLVDASLTLN) the chain is on the cytoplasmic side. Residues 122–142 (ILSVSFAFVGIIIISVSLAGL) traverse the membrane as a helical segment. The Extracellular portion of the chain corresponds to 143–186 (HPASEQCKQSKELSLIEHDYYQPFYNSDRSECAVTKSILTGALS). A helical membrane pass occupies residues 187–207 (VMLIISVLELGLALLSAMLWL). Topologically, residues 208-217 (REGVLTSLRM) are cytoplasmic.

The protein belongs to the MS4A family. Expressed only by thymus, spleen, peripheral lymph node and bone marrow.

The protein resides in the membrane. Functionally, may be involved in signal transduction as a component of a multimeric receptor complex. The polypeptide is Membrane-spanning 4-domains subfamily A member 6C (Ms4a6c) (Mus musculus (Mouse)).